The chain runs to 171 residues: 3-hydroxydecanoyl-[acyl-carrier-protein] dehydratase (171 aa).

H70 is an active-site residue.

This sequence belongs to the thioester dehydratase family. FabA subfamily. In terms of assembly, homodimer.

Its subcellular location is the cytoplasm. It catalyses the reaction a (3R)-hydroxyacyl-[ACP] = a (2E)-enoyl-[ACP] + H2O. It carries out the reaction (3R)-hydroxydecanoyl-[ACP] = (2E)-decenoyl-[ACP] + H2O. The enzyme catalyses (2E)-decenoyl-[ACP] = (3Z)-decenoyl-[ACP]. Its pathway is lipid metabolism; fatty acid biosynthesis. In terms of biological role, necessary for the introduction of cis unsaturation into fatty acids. Catalyzes the dehydration of (3R)-3-hydroxydecanoyl-ACP to E-(2)-decenoyl-ACP and then its isomerization to Z-(3)-decenoyl-ACP. Can catalyze the dehydratase reaction for beta-hydroxyacyl-ACPs with saturated chain lengths up to 16:0, being most active on intermediate chain length. The protein is 3-hydroxydecanoyl-[acyl-carrier-protein] dehydratase of Shewanella oneidensis (strain ATCC 700550 / JCM 31522 / CIP 106686 / LMG 19005 / NCIMB 14063 / MR-1).